The chain runs to 70 residues: UPF0337 protein BT9727_3385 (70 aa).

It belongs to the UPF0337 (CsbD) family.

The chain is UPF0337 protein BT9727_3385 from Bacillus thuringiensis subsp. konkukian (strain 97-27).